The following is a 312-amino-acid chain: Pantothenate kinase (312 aa).

97–104 provides a ligand contact to ATP; that stretch reads GSVAVGKS.

It belongs to the prokaryotic pantothenate kinase family.

It localises to the cytoplasm. It catalyses the reaction (R)-pantothenate + ATP = (R)-4'-phosphopantothenate + ADP + H(+). Its pathway is cofactor biosynthesis; coenzyme A biosynthesis; CoA from (R)-pantothenate: step 1/5. This is Pantothenate kinase from Mycobacterium marinum (strain ATCC BAA-535 / M).